A 455-amino-acid polypeptide reads, in one-letter code: Bifunctional protein GlmU (455 aa).

Positions 1–232 are pyrophosphorylase; it reads MASTTGALIL…DPNLLGVNNP (232 aa). Residues 10–13, lysine 24, glutamine 75, and 80–81 contribute to the UDP-N-acetyl-alpha-D-glucosamine site; these read LAAG and GT. Position 106 (aspartate 106) interacts with Mg(2+). UDP-N-acetyl-alpha-D-glucosamine-binding residues include glycine 141, glutamate 155, asparagine 172, and asparagine 230. Asparagine 230 is a Mg(2+) binding site. The tract at residues 233 to 253 is linker; sequence AELIRSEALLRTRLVIGHIEG. Positions 254–455 are N-acetyltransferase; that stretch reads GVLIHAPETV…QTNLPRKPKA (202 aa). Residues arginine 336 and lysine 354 each contribute to the UDP-N-acetyl-alpha-D-glucosamine site. Histidine 366 functions as the Proton acceptor in the catalytic mechanism. Residues tyrosine 369 and asparagine 380 each contribute to the UDP-N-acetyl-alpha-D-glucosamine site. Residues alanine 383, 389 to 390, serine 408, alanine 426, and arginine 443 contribute to the acetyl-CoA site; that span reads NY.

In the N-terminal section; belongs to the N-acetylglucosamine-1-phosphate uridyltransferase family. It in the C-terminal section; belongs to the transferase hexapeptide repeat family. In terms of assembly, homotrimer. The cofactor is Mg(2+).

The protein resides in the cytoplasm. The enzyme catalyses alpha-D-glucosamine 1-phosphate + acetyl-CoA = N-acetyl-alpha-D-glucosamine 1-phosphate + CoA + H(+). It carries out the reaction N-acetyl-alpha-D-glucosamine 1-phosphate + UTP + H(+) = UDP-N-acetyl-alpha-D-glucosamine + diphosphate. It functions in the pathway nucleotide-sugar biosynthesis; UDP-N-acetyl-alpha-D-glucosamine biosynthesis; N-acetyl-alpha-D-glucosamine 1-phosphate from alpha-D-glucosamine 6-phosphate (route II): step 2/2. The protein operates within nucleotide-sugar biosynthesis; UDP-N-acetyl-alpha-D-glucosamine biosynthesis; UDP-N-acetyl-alpha-D-glucosamine from N-acetyl-alpha-D-glucosamine 1-phosphate: step 1/1. It participates in bacterial outer membrane biogenesis; LPS lipid A biosynthesis. Functionally, catalyzes the last two sequential reactions in the de novo biosynthetic pathway for UDP-N-acetylglucosamine (UDP-GlcNAc). The C-terminal domain catalyzes the transfer of acetyl group from acetyl coenzyme A to glucosamine-1-phosphate (GlcN-1-P) to produce N-acetylglucosamine-1-phosphate (GlcNAc-1-P), which is converted into UDP-GlcNAc by the transfer of uridine 5-monophosphate (from uridine 5-triphosphate), a reaction catalyzed by the N-terminal domain. This is Bifunctional protein GlmU from Nitratidesulfovibrio vulgaris (strain DP4) (Desulfovibrio vulgaris).